A 463-amino-acid chain; its full sequence is Hydroxyacid-oxoacid transhydrogenase, mitochondrial (463 aa).

It belongs to the iron-containing alcohol dehydrogenase family. Hydroxyacid-oxoacid transhydrogenase subfamily.

It is found in the mitochondrion. The enzyme catalyses (S)-3-hydroxybutanoate + 2-oxoglutarate = (R)-2-hydroxyglutarate + acetoacetate. It carries out the reaction 4-hydroxybutanoate + 2-oxoglutarate = (R)-2-hydroxyglutarate + succinate semialdehyde. Catalyzes the cofactor-independent reversible oxidation of gamma-hydroxybutyrate (GHB) to succinic semialdehyde (SSA) coupled to reduction of 2-ketoglutarate (2-KG) to D-2-hydroxyglutarate (D-2-HG). L-3-hydroxybutyrate (L-3-OHB) is also a substrate for HOT when using 2-KG as hydrogen acceptor, resulting in the formation of D-2-HG. This Xenopus laevis (African clawed frog) protein is Hydroxyacid-oxoacid transhydrogenase, mitochondrial (adhfe1).